The chain runs to 1298 residues: DNA repair protein rad-50 (1298 aa).

Positions 13, 38, 39, 41, 42, 43, 44, 66, and 158 each coordinate ATP. Threonine 43 provides a ligand contact to Mg(2+). Glutamine 158 serves as a coordination point for Mg(2+). Coiled-coil stretches lie at residues 222-291, 317-598, and 622-660; these read ARQN…IRVE, EERA…QYRK, and AEEV…IEES. In terms of domain architecture, Zinc-hook spans 622 to 719; that stretch reads AEEVSEKLEN…EEIIIVKAEG (98 aa). Zn(2+) is bound by residues cysteine 666 and cysteine 669. 2 coiled-coil regions span residues 691–719 and 754–1092; these read LSFP…KAEG and KNEK…KESI.

Belongs to the SMC family. RAD50 subfamily. In terms of assembly, component of the MRN complex composed of two heterodimers rad-50 and mre-11 associated with a single nbs-1. The cofactor is Zn(2+).

Its subcellular location is the nucleus. The protein localises to the chromosome. The catalysed reaction is ATP + H2O = ADP + phosphate + H(+). Functionally, component of the MRN complex, which plays a central role in double-strand break (DSB) repair, DNA recombination, maintenance of telomere integrity and meiosis. The MRN complex is involved in the repair of DNA double-strand breaks (DSBs) via homologous recombination (HR), an error-free mechanism which primarily occurs during S and G2 phases. The complex (1) mediates the end resection of damaged DNA, which generates proper single-stranded DNA, a key initial steps in HR, and is (2) required for the recruitment of other repair factors and efficient activation of ATM and ATR upon DNA damage. The MRN complex possesses single-strand endonuclease activity and double-strand-specific 3'-5' exonuclease activity, which are provided by mre-11, to initiate end resection, which is required for single-strand invasion and recombination. Within the complex, rad-50 is both required to bind DNA ends and hold them in close proximity and regulate the activity of mre-11. Rad-50 provides an ATP-dependent control of mre-11 by positioning DNA ends into the mre-11 active site: ATP-binding induces a large structural change from an open form with accessible mre-11 nuclease sites into a closed form. This chain is DNA repair protein rad-50 (rad-50), found in Caenorhabditis elegans.